A 542-amino-acid polypeptide reads, in one-letter code: Chaperonin GroEL (542 aa).

ATP is bound by residues 29–32, 86–90, Gly-413, 476–478, and Asp-492; these read TLGP, DGTTT, and NAA.

The protein belongs to the chaperonin (HSP60) family. As to quaternary structure, forms a cylinder of 14 subunits composed of two heptameric rings stacked back-to-back. Interacts with the co-chaperonin GroES.

It is found in the cytoplasm. The catalysed reaction is ATP + H2O + a folded polypeptide = ADP + phosphate + an unfolded polypeptide.. Together with its co-chaperonin GroES, plays an essential role in assisting protein folding. The GroEL-GroES system forms a nano-cage that allows encapsulation of the non-native substrate proteins and provides a physical environment optimized to promote and accelerate protein folding. This chain is Chaperonin GroEL, found in Streptococcus mutans serotype c (strain ATCC 700610 / UA159).